We begin with the raw amino-acid sequence, 1262 residues long: Synaptopodin-2 (1262 aa).

The tract at residues 1–174 (MGTGDFICIS…PGSQEGHLVE (174 aa)) is interaction with VPS18. Residues 6–88 (FICISMTGGA…SLHLLIKRPT (83 aa)) enclose the PDZ domain. Polar residues-rich tracts occupy residues 89-105 (SGTSEALDSETENTNHQ) and 246-260 (TSLTSGTTVQTSSGR). Disordered regions lie at residues 89 to 114 (SGTSEALDSETENTNHQHLPHGGPME) and 239 to 276 (PAPEKADTSLTSGTTVQTSSGRELTVIQGRDPGGTGLP). 3 positions are modified to phosphoserine: Ser-304, Ser-323, and Ser-324. The interval 323–363 (SSEGTEQGEDQRSGKDQGRPHKHRARHARLRRSESLSEKQV) is disordered. A Phosphothreonine modification is found at Thr-327. Over residues 331–341 (EDQRSGKDQGR) the composition is skewed to basic and acidic residues. Residues 342–352 (PHKHRARHARL) show a composition bias toward basic residues. Basic and acidic residues predominate over residues 353–363 (RRSESLSEKQV). The Nuclear localization signal motif lies at 392–400 (KKRRRRARK). Interaction with ACTN2 stretches follow at residues 477–658 (MEML…FYDS), 659–922 (SEQI…PPVA), and 899–1153 (QSPT…NIEE). Disordered stretches follow at residues 503-576 (AQNE…GPQR) and 592-703 (NQTA…SPNP). Residues Ser-518, Ser-543, Ser-544, Ser-546, and Ser-549 each carry the phosphoserine modification. F-actin binding stretches follow at residues 530–658 (TSYQ…FYDS) and 659–801 (SEQI…VTAV). Residues 540 to 552 (RMQSSVSESSFQM) show a composition bias toward low complexity. The interaction with YWHAB stretch occupies residues 554–560 (RSLGSVP). Ser-558 carries the post-translational modification Phosphoserine; by PKA. 2 stretches are compositionally biased toward polar residues: residues 558–569 (SVPQQNGFSGVS) and 592–606 (NQTAAPFSPTQSVTS). Ser-599 is subject to Phosphoserine. An interaction with YWHAB region spans residues 602–809 (QSVTSPIPDF…AVSSIKIAQP (208 aa)). Thr-605 bears the Phosphothreonine; by PKA and CaMK2 mark. The residue at position 606 (Ser-606) is a Phosphoserine. 2 stretches are compositionally biased toward pro residues: residues 609 to 625 (PDFPAPPPYSAVSPPPE) and 639 to 650 (AQPPPWPQPAPW). The segment at 610–621 (DFPAPPPYSAVS) is interaction with BAG3. Residues 614–617 (PPPY) carry the PPPY motif motif. Position 617 is a phosphotyrosine (Tyr-617). Position 621 is a phosphoserine (Ser-621). The F-actin bundling activity stretch occupies residues 659-914 (SEQIASRDER…LPASWKYSSN (256 aa)). 2 positions are modified to phosphoserine: Ser-700 and Ser-724. 2 disordered regions span residues 741 to 799 (MQSS…PQVT) and 833 to 868 (VVSHNYTPKPSAPTPLVNAAPAGAGGPSNELPGMSG). The interval 745 to 898 (AKQKTPPPVA…DTVQAHTVRA (154 aa)) is actin binding. Phosphothreonine is present on Thr-749. The span at 756-782 (KPAVKTSSSSQPVAPVSPVWSPGVAPA) shows a compositional bias: low complexity. Residues Ser-772 and Ser-776 each carry the phosphoserine modification. Polar residues predominate over residues 786–799 (AFSTTNPPNPPQVT). Residues 808–1153 (QPTCPPARPA…EAFRPRNIEE (346 aa)) are interaction with FLNC. Ser-900, Ser-904, and Ser-908 each carry phosphoserine. Residues 933-957 (LAAIKSQPPGAQASKTSKKKGKKPL) form a disordered region. Residues 999 to 1018 (PAMKQALPPRQADIGSPTNA) form an interaction with ZYX region. Phosphoserine is present on residues Ser-1014, Ser-1055, and Ser-1090.

It belongs to the synaptopodin family. In terms of assembly, may self-associate in muscle cells under oxidative stress. Binds F-actin. Interacts with ACTN2; ACTN2 is proposed to anchor SYOP2 at Z lines in mature myocytes. Interacts with AKAP6, PPP3CA and CAMK2A. Interacts (phosphorylated form) with YWHAB; YWHAB competes with ACTN2 for interaction with SYNPO2. Interacts with KPNA2; mediating nuclear import of SYNOP2; dependent on interaction with YWHAB. Interacts with IPO13; may be implicated in SYNOP2 nuclear import. Interacts with ZYX, FLNC, ILK. Interacts with BAG3 (via WW 1 domain). May associate with the CASA complex consisting of HSPA8, HSPB8 and BAG3. Interacts with VPS18. Phosphorylated by PKA, and by CaMK2 at multiple sites. Dephosphorylated by calcineurin at Ser-558 and Thr-605; abrogating interaction with YWHAB and impairing nuclear import.

The protein localises to the nucleus. It is found in the cytoplasm. The protein resides in the cytoskeleton. It localises to the myofibril. Its subcellular location is the sarcomere. The protein localises to the z line. It is found in the cell junction. The protein resides in the focal adhesion. In terms of biological role, has an actin-binding and actin-bundling activity. Can induce the formation of F-actin networks. At the sarcomeric Z lines is proposed to act as adapter protein that links nascent myofibers to the sarcolemma via ZYX and may play a role in early assembly and stabilization of the Z lines. Involved in autophagosome formation. May play a role in chaperone-assisted selective autophagy (CASA) involved in Z lines maintenance in striated muscle under mechanical tension; may link the client-processing CASA chaperone machinery to a membrane-tethering and fusion complex providing autophagosome membranes. Involved in regulation of cell migration. May be a tumor suppressor. This is Synaptopodin-2 (Synpo2) from Rattus norvegicus (Rat).